We begin with the raw amino-acid sequence, 786 residues long: MTESNLGAQSRTATIDNGAFGTRVITFSTGRLARQAAGSVVAQLGETVVLSATTVGRQPKEQFDFFPLTVDVEERMYAAGRIPGSFFRREGRPSEDAILTCRLIDRPLRPSFVKGLRNEVQVVETVLALDPSHPYDVVAINAASMSTKLSGLPFSGPIGATRMAHIDGSWVAFPTHEELERATFDMVVAGRALPDGDVAIMMVEAEATEHTVKLVAGGASAPTEEVVASGLEAAKPAIRELCRAQSELAEVAAKPVAEFPVFLDYSDDAYQAVADLARSDVAEALKIAGKADREEALDRIKARVIEDLGPRFEGREKELSAALRSLTKSEVRSRVLREQVRIDGRGPRDIRPLTAEVGVLPRVHGSALFERGETQILGVTTLNMLRMEQSLDTLSPEKSKRYMHNYNFPPYSTGETGRVGSPKRREIGHGALAERALIPVLPSREEFPYAIRQVSEALGSNGSTSMGSVCASTLGLLSAGVPLKAPVAGIAMGLISDEVEGKTRYVTLTDILGAEDAFGDMDFKVAGTQEFVTALQLDTKLDGIPSDVLAAALQQAYEARQTILEVMQAAIEAPATMSDYAPRVTTVKIPVDKIGMVIGPKGQTINAIQDETGAEISIEDDGTIYVGATNGPSAQAAVERVNAIANPTLPKVGDRFLGTVVKTAAFGAFVSLLPGRDGLLHISKVGDGKRVEKVEDYLNVGDKVEVEIADIDQRGKIYLDKVRPEGAEGPAEAAATDRPAGRDRGDRAPRDRGDRGDRERGSRGPDRGDGGEGGGESRPRRRTRHS.

The Mg(2+) site is built by Asp-516 and Asp-522. Residues 582–641 (PRVTTVKIPVDKIGMVIGPKGQTINAIQDETGAEISIEDDGTIYVGATNGPSAQAAVERV) enclose the KH domain. One can recognise an S1 motif domain in the interval 653 to 722 (GDRFLGTVVK…QRGKIYLDKV (70 aa)). A disordered region spans residues 722–786 (VRPEGAEGPA…SRPRRRTRHS (65 aa)). The segment covering 727–738 (AEGPAEAAATDR) has biased composition (low complexity). Basic and acidic residues predominate over residues 739–778 (PAGRDRGDRAPRDRGDRGDRERGSRGPDRGDGGEGGGESR).

Belongs to the polyribonucleotide nucleotidyltransferase family. Mg(2+) is required as a cofactor.

Its subcellular location is the cytoplasm. The enzyme catalyses RNA(n+1) + phosphate = RNA(n) + a ribonucleoside 5'-diphosphate. In terms of biological role, involved in mRNA degradation. Catalyzes the phosphorolysis of single-stranded polyribonucleotides processively in the 3'- to 5'-direction. The sequence is that of Polyribonucleotide nucleotidyltransferase from Salinispora arenicola (strain CNS-205).